The sequence spans 211 residues: Large ribosomal subunit protein uL3 (211 aa).

Residues 122–157 (NQKRNNFGRGPMSHGSKNHRAPGSIGAGTTPGRVYP) form a disordered region.

It belongs to the universal ribosomal protein uL3 family. In terms of assembly, part of the 50S ribosomal subunit. Forms a cluster with proteins L14 and L19.

In terms of biological role, one of the primary rRNA binding proteins, it binds directly near the 3'-end of the 23S rRNA, where it nucleates assembly of the 50S subunit. The chain is Large ribosomal subunit protein uL3 from Trichormus variabilis (strain ATCC 29413 / PCC 7937) (Anabaena variabilis).